The following is a 473-amino-acid chain: MNNRELINRYLGKTADQPIYYALFHKVGKIKQILNFDLNVFLKLLLKNRDRFLRENKQPTAEIKRRLTHYFTKQHRVRKVGKILSIVEFQHVIVTTFTRVLGVLTIDNRRVSKMYSSTAILDYAAHEDYVEAMLRSYRVTDGAGPPKGRNKVSDLVGYVISMLKEYLKRHNKSAFCHGSYSLHLLNPAIEYGDIDMLQTNSRTFLINLAFLIYCNTGRVTTMMKIPYLLNYIVMFDEEQAHIVDSFQVSQEIFDRIPKILINDIYIIDPCVQLLNGIKMFSQVDRLDDLHTKFEKLRARFCTLLEYVLYDYDMRIGEGSGAGALRRSRFAYSERVATVEAGALGEDLSPARWVAFMDNAALDARIGASTRQAADFGPVTNSRFLEEDGCLYGYFSNTLLLTPDGAPHPVSCNALAAHFLMYFVMTGAPCKPQLACLLNSLVVPEAREFTLVPRDKKLGDHVILSIDHDVFIDF.

Catalysis depends on residues Asp193 and Asp195.

This sequence belongs to the poxviridae poly(A) polymerase catalytic subunit family. Heterodimer of a large (catalytic) subunit and a small (regulatory) subunit.

The catalysed reaction is RNA(n) + ATP = RNA(n)-3'-adenine ribonucleotide + diphosphate. Its function is as follows. Polymerase that creates the 3'-poly(A) tail of mRNA's. In Crocodylus johnstoni (Australian freshwater crocodile), this protein is Poly(A) polymerase catalytic subunit (PAPL).